We begin with the raw amino-acid sequence, 91 residues long: uncharacterized protein (91 aa).

This is an uncharacterized protein from Escherichia coli (Bacteriophage T4).